A 263-amino-acid polypeptide reads, in one-letter code: Exosome complex component Rrp4 (263 aa).

Positions 51–127 (GKYIPSRKDF…KAMKVELSMR (77 aa)) constitute an S1 motif domain. Residues 135-196 (SKGRIIEVVP…DRLTTAIEMI (62 aa)) enclose the KH domain. Residues 213-263 (LRGEPEGTEGSDEEQLVDEEVAGVSLEDDDVTEETSRKVDVLLDNDTDETN) form a disordered region. The segment covering 218 to 245 (EGTEGSDEEQLVDEEVAGVSLEDDDVTE) has biased composition (acidic residues).

Belongs to the RRP4 family. As to quaternary structure, component of the archaeal exosome complex. Forms a trimer of Rrp4 and/or Csl4 subunits. The trimer associates with a hexameric ring-like arrangement composed of 3 Rrp41-Rrp42 heterodimers.

Its subcellular location is the cytoplasm. In terms of biological role, non-catalytic component of the exosome, which is a complex involved in RNA degradation. Increases the RNA binding and the efficiency of RNA degradation. Confers strong poly(A) specificity to the exosome. In Methanococcoides burtonii (strain DSM 6242 / NBRC 107633 / OCM 468 / ACE-M), this protein is Exosome complex component Rrp4.